Here is a 494-residue protein sequence, read N- to C-terminus: Alpha-amylase-related protein (494 aa).

The first 20 residues, Met-1–Ala-20, serve as a signal peptide directing secretion. Gln-21 bears the Pyrrolidone carboxylic acid mark. A disulfide bridge links Cys-48 with Cys-104. Ca(2+) is bound by residues Asn-118, Gln-169, and Asp-178. An intrachain disulfide couples Cys-157 to Cys-171. Arg-206 is a binding site for chloride. Residue Asp-208 is the Nucleophile of the active site. His-212 lines the Ca(2+) pocket. Glu-245 (proton donor) is an active-site residue. Chloride is bound by residues Asn-308 and Arg-343. Disulfide bonds link Cys-376–Cys-382, Cys-418–Cys-441, and Cys-448–Cys-460.

It belongs to the glycosyl hydrolase 13 family. In terms of assembly, monomer. It depends on Ca(2+) as a cofactor. Chloride is required as a cofactor.

It localises to the secreted. The enzyme catalyses Endohydrolysis of (1-&gt;4)-alpha-D-glucosidic linkages in polysaccharides containing three or more (1-&gt;4)-alpha-linked D-glucose units.. This Drosophila bocqueti (Fruit fly) protein is Alpha-amylase-related protein (Amyrel).